We begin with the raw amino-acid sequence, 144 residues long: Maximins 8/H7 (144 aa).

An N-terminal signal peptide occupies residues 1–18 (MKFKYIVAVSFLIASAYA). A propeptide spanning residues 19-43 (RSEENDEQSLSQRDVLEEESLREIR) is cleaved from the precursor. An Asparagine amide modification is found at Asn-70. Positions 74-123 (TAEDHEVMKRLEAVMRDLDSLDYPEEASERETRGFNQEEIANLFTKKEKR) are excised as a propeptide. Leucine amide is present on Leu-143.

It belongs to the bombinin family. As to expression, expressed by the skin glands.

It is found in the secreted. In terms of biological role, maximin-8 shows antimicrobial activity against bacteria and against the fungus C.albicans. It has little hemolytic activity. Its function is as follows. Maximin-H7 shows antimicrobial activity against bacteria and against the fungus C.albicans. Shows strong hemolytic activity. In Bombina maxima (Giant fire-bellied toad), this protein is Maximins 8/H7.